The following is a 279-amino-acid chain: H-2 class II histocompatibility antigen gamma chain (279 aa).

The segment at Met-1–Glu-23 is disordered. At Met-1–Arg-29 the chain is on the cytoplasmic side. At Ser-9 the chain carries Phosphoserine. Residues Gly-30–Tyr-55 traverse the membrane as a helical; Signal-anchor for type II membrane protein segment. Residues Gln-56–Leu-279 are Extracellular-facing. N-linked (GlcNAc...) asparagine glycosylation is found at Asn-113 and Asn-119. The Thyroglobulin type-1 domain maps to Leu-193–Cys-254. 3 cysteine pairs are disulfide-bonded: Cys-196–Cys-215, Cys-226–Cys-233, and Cys-235–Cys-254. Ser-265 carries O-linked (Xyl...) (chondroitin sulfate) serine glycosylation.

Nonamer composed of three alpha/beta/gamma heterotrimers. Interacts with CD44; this complex is essential for the MIF-induced signaling cascade that results in B cell survival. In terms of assembly, interacts with the mature form of CTSL; the complex survive in neutral pH environment. As to expression, expressed in thymus and lymph noodes. Expressed by antigen-presenting cells (APCs). Expressed in thymus and lymph noodes.

It is found in the late endosome. It localises to the lysosome. The protein localises to the cell membrane. Its subcellular location is the endoplasmic reticulum membrane. The protein resides in the golgi apparatus. It is found in the trans-Golgi network. It localises to the endosome. The protein localises to the secreted. Plays a critical role in MHC class II antigen processing by stabilizing peptide-free class II alpha/beta heterodimers in a complex soon after their synthesis and directing transport of the complex from the endoplasmic reticulum to compartments where peptide loading of class II takes place. Enhance also the stimulation of T-cell responses through interaction with CD44. Functionally, stabilizes the conformation of mature CTSL by binding to its active site and serving as a chaperone to help maintain a pool of mature enzyme in endocytic compartments and extracellular space of antigen-presenting cells (APCs). In terms of biological role, binds to the peptide-binding site of MHC class II alpha/beta heterodimers forming an alpha-beta-CLIP complex, thereby preventing the loading of antigenic peptides to the MHC class II complex until its release by HLA-DM in the endosome. The protein is H-2 class II histocompatibility antigen gamma chain of Mus musculus (Mouse).